Reading from the N-terminus, the 258-residue chain is Probable dihydroorotate dehydrogenase B (NAD(+)), electron transfer subunit (258 aa).

An FAD-binding FR-type domain is found at 1 to 90; the sequence is MRPISATIKE…RGPYGNGWEI (90 aa). The [2Fe-2S] cluster site is built by cysteine 210, cysteine 215, cysteine 218, and cysteine 228.

This sequence belongs to the PyrK family. As to quaternary structure, heterotetramer of 2 PyrK and 2 PyrD type B subunits. [2Fe-2S] cluster serves as cofactor. Requires FAD as cofactor.

The protein operates within pyrimidine metabolism; UMP biosynthesis via de novo pathway; orotate from (S)-dihydroorotate (NAD(+) route): step 1/1. Functionally, responsible for channeling the electrons from the oxidation of dihydroorotate from the FMN redox center in the PyrD type B subunit to the ultimate electron acceptor NAD(+). This Methanocella arvoryzae (strain DSM 22066 / NBRC 105507 / MRE50) protein is Probable dihydroorotate dehydrogenase B (NAD(+)), electron transfer subunit.